Reading from the N-terminus, the 1113-residue chain is uncharacterized protein (1113 aa).

Residue 313 to 320 (GPPGTGKS) coordinates ATP.

This sequence belongs to the DNA2/NAM7 helicase family.

This is an uncharacterized protein from Mycoplasma genitalium (strain ATCC 33530 / DSM 19775 / NCTC 10195 / G37) (Mycoplasmoides genitalium).